Reading from the N-terminus, the 539-residue chain is MHTWRFRRPFREPAINRTDRMRDHFSIDHKRTPRRRLSVKAILALDQGTTSSRAILFAHDGSIIGVSQKEFTQHYPKPGWVEHDATEIWTTQLAVARDVLKQHDMDVSDIEAIGITNQRETTLVWDRATGEPIHNAIVWQDRRTASDCDALRNAGHSDCVQKKTGLIIDAYFCATKLRWILDNVAGARERAENGELAFGTIDSWLFWNLTGGKLHATDVTNASRTMLWNIHTGQWDDELLALFKVPKEVLPSVHPSSHIYGETESSLFGKSIPLGGAAGDQQSALFGQNCTQPGMAKNTYGTGCFMLMNIGEEAAASPSRLLTTVACWDGGKREYAYEGSIFIAGAIVQWLRDGLGIIQSSSEVESLAASVDDTDGVYLVPAFAGLGAPHWDAYARGILVGLTRGTTKAHIARAALEGIAFQVADVLDAMRKDSGVAIEELRVDGGAAANDLLMQFQADIIGARVVRPKVIETTAAGAAYVAGLATGFWKDSADIERIWETDRVFEPQMPAEEVARRRRRWAAALERSKQWVEQEASAD.

Threonine 49 serves as a coordination point for ADP. ATP contacts are provided by threonine 49, threonine 50, and serine 51. Threonine 49 is a sn-glycerol 3-phosphate binding site. Arginine 53 serves as a coordination point for ADP. Residues arginine 119, glutamate 120, tyrosine 171, and aspartate 280 each coordinate sn-glycerol 3-phosphate. Glycerol-binding residues include arginine 119, glutamate 120, tyrosine 171, aspartate 280, and glutamine 281. 2 residues coordinate ADP: threonine 302 and glycine 345. ATP is bound by residues threonine 302, glycine 345, glutamine 349, and glycine 446. Positions 446 and 450 each coordinate ADP.

Belongs to the FGGY kinase family.

The catalysed reaction is glycerol + ATP = sn-glycerol 3-phosphate + ADP + H(+). The protein operates within polyol metabolism; glycerol degradation via glycerol kinase pathway; sn-glycerol 3-phosphate from glycerol: step 1/1. Its activity is regulated as follows. Inhibited by fructose 1,6-bisphosphate (FBP). In terms of biological role, key enzyme in the regulation of glycerol uptake and metabolism. Catalyzes the phosphorylation of glycerol to yield sn-glycerol 3-phosphate. This chain is Glycerol kinase, found in Rhodopirellula baltica (strain DSM 10527 / NCIMB 13988 / SH1).